We begin with the raw amino-acid sequence, 456 residues long: Bifunctional protein GlmU (456 aa).

The pyrophosphorylase stretch occupies residues Met-1 to Arg-229. UDP-N-acetyl-alpha-D-glucosamine is bound by residues Leu-11–Gly-14, Lys-25, Gln-76, Gly-81–Thr-82, Tyr-103–Asp-105, Gly-140, Glu-154, Asn-169, and Asn-227. Asp-105 provides a ligand contact to Mg(2+). A Mg(2+)-binding site is contributed by Asn-227. Residues Leu-230–Ser-250 form a linker region. The tract at residues Gly-251–Lys-456 is N-acetyltransferase. UDP-N-acetyl-alpha-D-glucosamine is bound by residues Arg-333 and Lys-351. His-363 serves as the catalytic Proton acceptor. Residues Tyr-366 and Asn-377 each contribute to the UDP-N-acetyl-alpha-D-glucosamine site. Residues Ala-380, Asn-386–Tyr-387, Ser-405, Ala-423, and Arg-440 contribute to the acetyl-CoA site.

This sequence in the N-terminal section; belongs to the N-acetylglucosamine-1-phosphate uridyltransferase family. The protein in the C-terminal section; belongs to the transferase hexapeptide repeat family. In terms of assembly, homotrimer. Mg(2+) serves as cofactor.

It is found in the cytoplasm. The catalysed reaction is alpha-D-glucosamine 1-phosphate + acetyl-CoA = N-acetyl-alpha-D-glucosamine 1-phosphate + CoA + H(+). It catalyses the reaction N-acetyl-alpha-D-glucosamine 1-phosphate + UTP + H(+) = UDP-N-acetyl-alpha-D-glucosamine + diphosphate. It functions in the pathway nucleotide-sugar biosynthesis; UDP-N-acetyl-alpha-D-glucosamine biosynthesis; N-acetyl-alpha-D-glucosamine 1-phosphate from alpha-D-glucosamine 6-phosphate (route II): step 2/2. Its pathway is nucleotide-sugar biosynthesis; UDP-N-acetyl-alpha-D-glucosamine biosynthesis; UDP-N-acetyl-alpha-D-glucosamine from N-acetyl-alpha-D-glucosamine 1-phosphate: step 1/1. The protein operates within bacterial outer membrane biogenesis; LPS lipid A biosynthesis. Catalyzes the last two sequential reactions in the de novo biosynthetic pathway for UDP-N-acetylglucosamine (UDP-GlcNAc). The C-terminal domain catalyzes the transfer of acetyl group from acetyl coenzyme A to glucosamine-1-phosphate (GlcN-1-P) to produce N-acetylglucosamine-1-phosphate (GlcNAc-1-P), which is converted into UDP-GlcNAc by the transfer of uridine 5-monophosphate (from uridine 5-triphosphate), a reaction catalyzed by the N-terminal domain. In Salmonella dublin (strain CT_02021853), this protein is Bifunctional protein GlmU.